The following is a 324-amino-acid chain: Quinolinate synthase 2 (324 aa).

H48 and S66 together coordinate iminosuccinate. C111 is a binding site for [4Fe-4S] cluster. Iminosuccinate contacts are provided by residues 137–139 (YVN) and S154. A [4Fe-4S] cluster-binding site is contributed by C196. Residues 222 to 224 (HPE) and T239 each bind iminosuccinate. A [4Fe-4S] cluster-binding site is contributed by C282.

Belongs to the quinolinate synthase family. Type 2 subfamily. It depends on [4Fe-4S] cluster as a cofactor.

Its subcellular location is the cytoplasm. It carries out the reaction iminosuccinate + dihydroxyacetone phosphate = quinolinate + phosphate + 2 H2O + H(+). It participates in cofactor biosynthesis; NAD(+) biosynthesis; quinolinate from iminoaspartate: step 1/1. Catalyzes the condensation of iminoaspartate with dihydroxyacetone phosphate to form quinolinate. The protein is Quinolinate synthase 2 of Mesorhizobium japonicum (strain LMG 29417 / CECT 9101 / MAFF 303099) (Mesorhizobium loti (strain MAFF 303099)).